Consider the following 380-residue polypeptide: Putative glutamate--cysteine ligase 2 (380 aa).

Belongs to the glutamate--cysteine ligase type 2 family. YbdK subfamily.

The enzyme catalyses L-cysteine + L-glutamate + ATP = gamma-L-glutamyl-L-cysteine + ADP + phosphate + H(+). Its function is as follows. ATP-dependent carboxylate-amine ligase which exhibits weak glutamate--cysteine ligase activity. This Pseudomonas entomophila (strain L48) protein is Putative glutamate--cysteine ligase 2.